A 124-amino-acid chain; its full sequence is MAMKIRLARGGSKKRPHYAIVASDSRMPRDGRFIEKLGTYNPLLPKDSEDRIKMNLERVQYWLGQGAQPTDRVARFLEAAGVKEKAERKNLKKGEPGKAAKERAEKRAAREAAANAPAEEAASE.

The span at 84–110 (EKAERKNLKKGEPGKAAKERAEKRAAR) shows a compositional bias: basic and acidic residues. Positions 84-124 (EKAERKNLKKGEPGKAAKERAEKRAAREAAANAPAEEAASE) are disordered. Positions 111–124 (EAAANAPAEEAASE) are enriched in low complexity.

It belongs to the bacterial ribosomal protein bS16 family.

This chain is Small ribosomal subunit protein bS16, found in Paracoccus denitrificans (strain Pd 1222).